A 421-amino-acid polypeptide reads, in one-letter code: Imidazolonepropionase (421 aa).

Fe(3+) is bound by residues histidine 81 and histidine 83. The Zn(2+) site is built by histidine 81 and histidine 83. 4-imidazolone-5-propanoate contacts are provided by arginine 90, tyrosine 153, and histidine 186. Tyrosine 153 lines the N-formimidoyl-L-glutamate pocket. Position 251 (histidine 251) interacts with Fe(3+). Residue histidine 251 coordinates Zn(2+). Glutamate 254 is a 4-imidazolone-5-propanoate binding site. Aspartate 326 contacts Fe(3+). Aspartate 326 serves as a coordination point for Zn(2+). The N-formimidoyl-L-glutamate site is built by asparagine 328 and glycine 330. Serine 331 contacts 4-imidazolone-5-propanoate.

It belongs to the metallo-dependent hydrolases superfamily. HutI family. Zn(2+) is required as a cofactor. Fe(3+) serves as cofactor.

The protein resides in the cytoplasm. The enzyme catalyses 4-imidazolone-5-propanoate + H2O = N-formimidoyl-L-glutamate. The protein operates within amino-acid degradation; L-histidine degradation into L-glutamate; N-formimidoyl-L-glutamate from L-histidine: step 3/3. Functionally, catalyzes the hydrolytic cleavage of the carbon-nitrogen bond in imidazolone-5-propanoate to yield N-formimidoyl-L-glutamate. It is the third step in the universal histidine degradation pathway. The chain is Imidazolonepropionase from Streptococcus sanguinis (strain SK36).